A 179-amino-acid polypeptide reads, in one-letter code: Auxin-responsive protein IAA15 (179 aa).

The EAR-like (transcriptional repression) signature appears at 21–25 (LTLAL). One can recognise a PB1 domain in the interval 86–173 (RKYVKVALDG…SCKRMRLMKT (88 aa)).

It belongs to the Aux/IAA family. Homodimers and heterodimers.

It is found in the nucleus. Functionally, aux/IAA proteins are short-lived transcriptional factors that function as repressors of early auxin response genes at low auxin concentrations. Repression is thought to result from the interaction with auxin response factors (ARFs), proteins that bind to the auxin-responsive promoter element (AuxRE). Formation of heterodimers with ARF proteins may alter their ability to modulate early auxin response genes expression. In Arabidopsis thaliana (Mouse-ear cress), this protein is Auxin-responsive protein IAA15 (IAA15).